The primary structure comprises 211 residues: FMN-dependent NADH:quinone oxidoreductase 2 (211 aa).

FMN-binding positions include Ser10 and 17–19 (SRS).

The protein belongs to the azoreductase type 1 family. In terms of assembly, homodimer. FMN is required as a cofactor.

The enzyme catalyses 2 a quinone + NADH + H(+) = 2 a 1,4-benzosemiquinone + NAD(+). It carries out the reaction N,N-dimethyl-1,4-phenylenediamine + anthranilate + 2 NAD(+) = 2-(4-dimethylaminophenyl)diazenylbenzoate + 2 NADH + 2 H(+). Functionally, quinone reductase that provides resistance to thiol-specific stress caused by electrophilic quinones. Its function is as follows. Also exhibits azoreductase activity. Catalyzes the reductive cleavage of the azo bond in aromatic azo compounds to the corresponding amines. The polypeptide is FMN-dependent NADH:quinone oxidoreductase 2 (Listeria innocua serovar 6a (strain ATCC BAA-680 / CLIP 11262)).